We begin with the raw amino-acid sequence, 69 residues long: Putative defensin-like protein 312 (69 aa).

Positions Met-1 to Ser-19 are cleaved as a signal peptide. Cys-45 and Cys-57 form a disulfide bridge.

Belongs to the DEFL family.

The protein localises to the secreted. This is Putative defensin-like protein 312 from Arabidopsis thaliana (Mouse-ear cress).